Reading from the N-terminus, the 358-residue chain is E3 ubiquitin-protein ligase SIS3 (358 aa).

The signal sequence occupies residues 1–27 (MAMRGVDFKWYDGFFLSMLATSVIIVA). A run of 3 helical transmembrane segments spans residues 40–60 (LHIW…FMFV), 85–105 (VVVL…WTVI), and 125–145 (GFLI…FICV). Residues 235–276 (CLICLEEFHIGHEVRGLPCAHNFHVECIDQWLRLNVKCPRCR) form an RING-type; atypical zinc finger. The disordered stretch occupies residues 336–358 (TALETAENGGVPPVLTDLSPSRR).

As to expression, expressed in roots, stems, leaves, flowers and siliques.

It localises to the membrane. It catalyses the reaction S-ubiquitinyl-[E2 ubiquitin-conjugating enzyme]-L-cysteine + [acceptor protein]-L-lysine = [E2 ubiquitin-conjugating enzyme]-L-cysteine + N(6)-ubiquitinyl-[acceptor protein]-L-lysine.. Its pathway is protein modification; protein ubiquitination. E3 ubiquitin protein ligase that acts as a positive regulator of sugar signaling during early seedling development. Possesses E3 ligase activity in vitro. The polypeptide is E3 ubiquitin-protein ligase SIS3 (SIS3) (Arabidopsis thaliana (Mouse-ear cress)).